Here is a 115-residue protein sequence, read N- to C-terminus: Potassium-transporting ATPase potassium-binding subunit (115 aa).

The next 2 helical transmembrane spans lie at 8–28 (YFLL…VAFF) and 60–80 (SYCT…YGLL).

It belongs to the KdpA family. In terms of assembly, the system is composed of three essential subunits: KdpA, KdpB and KdpC.

The protein localises to the cell membrane. In terms of biological role, part of the high-affinity ATP-driven potassium transport (or Kdp) system, which catalyzes the hydrolysis of ATP coupled with the electrogenic transport of potassium into the cytoplasm. This subunit binds the extracellular potassium ions and delivers the ions to the membrane domain of KdpB through an intramembrane tunnel. The sequence is that of Potassium-transporting ATPase potassium-binding subunit from Geobacillus stearothermophilus (Bacillus stearothermophilus).